We begin with the raw amino-acid sequence, 500 residues long: FAD-linked oxidoreductase chyH (500 aa).

An N-terminal signal peptide occupies residues 1–20; sequence MRLQAVTAVAAWAVASACQS. The 171-residue stretch at 65 to 235 folds into the FAD-binding PCMH-type domain; that stretch reads LEVPTVNIVI…TSVTSKTYDI (171 aa). 4 N-linked (GlcNAc...) asparagine glycosylation sites follow: asparagine 199, asparagine 266, asparagine 275, and asparagine 383.

It belongs to the oxygen-dependent FAD-linked oxidoreductase family. Requires FAD as cofactor.

The protein operates within pigment biosynthesis. Its function is as follows. FAD-linked oxidoreductase; part of the gene cluster that mediates the biosynthesis of the yellow pigment chrysogine. the NRPS chyA mediates the condensation of anthranilic acid and alanine into the intermediate 2-(2-aminopropanamido)benzoic acid. The remainder of the pathway is highly branched yielding at least 13 chrysogine-related compounds. The malonyl transferase chyE converts 2-(2-aminopropanamido)benzoic acid and 2-(2-aminopropanamido)benzamidine into 2-(2-(2-carboxyacetamido)propanamido)benzoic acid and 3-((1-((2-carbamoylphenyl)amino)-1-oxopropan-2-yl)amino)-3-oxopropanoic acid, respectively. ChyD is an amidase, being responsible for the amidation of the carboxylic acid moiety of 2-(2-aminopropanamido)benzoic acid, 2-(2-(2-carboxyacetamido)propanamido)benzoic acid and 2-(2-((4-amino-1-carboxy-4-oxobutyl)amino)propanamido)benzoic acid. ChyC is involved in the same reactions as ChyD, but plays a more minor role in the amidation reactions compared to chyD. The oxidoreductases chyH and chyM are involved in oxidation reactions that form N-pyruvoylanthranilamide from 2-(2-aminopropanamido)benzamidine and (1-((2-carbamoylphenyl)amino)-1-oxopropan-2-yl)glutamine, respectively. N-pyruvoylanthranilamide is further converted via two further branches in the pathway, yielding chrysogine and additional chrysogine-related coumpounds. Chrysogine is likely formed by a spontaneous ring closure from N-pyruvoylanthranilamide. The sequence is that of FAD-linked oxidoreductase chyH from Penicillium rubens (strain ATCC 28089 / DSM 1075 / NRRL 1951 / Wisconsin 54-1255) (Penicillium chrysogenum).